Here is a 118-residue protein sequence, read N- to C-terminus: Large ribosomal subunit protein bL20 (118 aa).

The protein belongs to the bacterial ribosomal protein bL20 family.

In terms of biological role, binds directly to 23S ribosomal RNA and is necessary for the in vitro assembly process of the 50S ribosomal subunit. It is not involved in the protein synthesizing functions of that subunit. This is Large ribosomal subunit protein bL20 from Lactobacillus delbrueckii subsp. bulgaricus (strain ATCC BAA-365 / Lb-18).